The sequence spans 427 residues: Phosphomethylpyrimidine synthase (427 aa).

Residues N66, M95, Y124, H163, 185–187 (SRG), 226–229 (DGLR), and E265 contribute to the substrate site. H269 is a binding site for Zn(2+). Y292 serves as a coordination point for substrate. Residue H333 coordinates Zn(2+). Positions 409, 412, and 416 each coordinate [4Fe-4S] cluster.

The protein belongs to the ThiC family. Homodimer. [4Fe-4S] cluster is required as a cofactor.

It carries out the reaction 5-amino-1-(5-phospho-beta-D-ribosyl)imidazole + S-adenosyl-L-methionine = 4-amino-2-methyl-5-(phosphooxymethyl)pyrimidine + CO + 5'-deoxyadenosine + formate + L-methionine + 3 H(+). Its pathway is cofactor biosynthesis; thiamine diphosphate biosynthesis. Catalyzes the synthesis of the hydroxymethylpyrimidine phosphate (HMP-P) moiety of thiamine from aminoimidazole ribotide (AIR) in a radical S-adenosyl-L-methionine (SAM)-dependent reaction. This chain is Phosphomethylpyrimidine synthase, found in Syntrophus aciditrophicus (strain SB).